The primary structure comprises 467 residues: UDP-N-acetylmuramate--L-alanine ligase (467 aa).

114 to 120 (GTHGKTT) is an ATP binding site.

Belongs to the MurCDEF family.

It is found in the cytoplasm. It carries out the reaction UDP-N-acetyl-alpha-D-muramate + L-alanine + ATP = UDP-N-acetyl-alpha-D-muramoyl-L-alanine + ADP + phosphate + H(+). It functions in the pathway cell wall biogenesis; peptidoglycan biosynthesis. Functionally, cell wall formation. This Nitrobacter hamburgensis (strain DSM 10229 / NCIMB 13809 / X14) protein is UDP-N-acetylmuramate--L-alanine ligase.